The sequence spans 237 residues: MRSGVIAQKLGMTRVYNDAGEHVPVTVLRMENCHVVAQRTVEKNGYTAVQLGVGMAKVKNTSKAMRGHFAKAEVEPKAKLAEFRVSPDNLLEVGVEITAEHFVAGQKVDVTGTSIGKGFAGVMKRHNFGGHRASHGNSITHRSHGSTGQRQDPGKVFKGKKMAGHMGQTRVTTQNIEVVSTDSDRGLILVRGAVPGSKGAWILVRDAVKASLPENAPKPAGLRAGAKAEAAATEGAE.

Disordered regions lie at residues 133–155 (ASHGNSITHRSHGSTGQRQDPGK) and 213–237 (PENAPKPAGLRAGAKAEAAATEGAE). Over residues 135–150 (HGNSITHRSHGSTGQR) the composition is skewed to polar residues. Gln-151 bears the N5-methylglutamine mark. Over residues 220–237 (AGLRAGAKAEAAATEGAE) the composition is skewed to low complexity.

Belongs to the universal ribosomal protein uL3 family. In terms of assembly, part of the 50S ribosomal subunit. Forms a cluster with proteins L14 and L19. In terms of processing, methylated by PrmB.

One of the primary rRNA binding proteins, it binds directly near the 3'-end of the 23S rRNA, where it nucleates assembly of the 50S subunit. The sequence is that of Large ribosomal subunit protein uL3 from Brucella canis (strain ATCC 23365 / NCTC 10854 / RM-666).